Consider the following 1132-residue polypeptide: Eisosome protein SEG2 (1132 aa).

The span at 76 to 95 (KRTSSLPNQGHKNTSNNSAG) shows a compositional bias: polar residues. Disordered regions lie at residues 76 to 142 (KRTS…GNSG) and 171 to 225 (RYSL…NDYH). The segment covering 101–113 (AHEDAETTFREFG) has biased composition (basic and acidic residues). The span at 115 to 142 (KQSSKVLNISSSTGQNSKSRTTSLGNSG) shows a compositional bias: polar residues. Phosphoserine is present on S137. Positions 208 to 225 (GSQEKKSESGGKSKNDYH) are enriched in basic and acidic residues. Phosphoserine is present on S280. Positions 404–429 (PTLSEPKPAYVPPEDVEKEPSTLSNQ) are disordered. Phosphoserine is present on residues S504 and S507. 2 disordered regions span residues 510–938 (GGNQ…FRSM) and 961–993 (EKKE…THTT). K526 participates in a covalent cross-link: Glycyl lysine isopeptide (Lys-Gly) (interchain with G-Cter in ubiquitin). Acidic residues-rich tracts occupy residues 550–561 (DQEEALSDNEPE) and 595–644 (KDDD…DDEY). S556 bears the Phosphoserine mark. Composition is skewed to polar residues over residues 688 to 699 (SENAEVSQSGTN) and 710 to 735 (YLTN…TDTT). Residue K743 forms a Glycyl lysine isopeptide (Lys-Gly) (interchain with G-Cter in ubiquitin) linkage. A compositionally biased stretch (low complexity) spans 761–773 (SSTSSSIYSIETS). Polar residues-rich tracts occupy residues 774 to 810 (PNID…SSHQ) and 827 to 845 (NRSC…TLSH). The span at 850–860 (PASDSSSSPPY) shows a compositional bias: low complexity. The segment covering 916–930 (PPARKSSFEKERPAK) has biased composition (basic and acidic residues). A phosphoserine mark is found at S980 and S1022.

The protein belongs to the SEG1 family. As to quaternary structure, component of eisosomes, large cytoplasmic protein assemblies that localize to specialized domains termed MCCs on the plasma membrane.

It is found in the cell membrane. In terms of biological role, likely plays only a minor role in eisosome assembly. In Saccharomyces cerevisiae (strain ATCC 204508 / S288c) (Baker's yeast), this protein is Eisosome protein SEG2 (SEG2).